Here is a 383-residue protein sequence, read N- to C-terminus: uncharacterized protein (383 aa).

This sequence to V.anguillarum virulence protein VirA.

Its function is as follows. Could have an enzymatic function. This is an uncharacterized protein from Sinorhizobium fredii (strain NBRC 101917 / NGR234).